A 291-amino-acid polypeptide reads, in one-letter code: Ecto-ADP-ribosyltransferase 5 (291 aa).

The signal sequence occupies residues 1-22 (MALAALMIALGSLGLHTWQAQA). Residues Cys42 and Cys258 are joined by a disulfide bond. Residues 62–252 (ALLRESWEAA…LVTLWSYNQT (191 aa)) enclose the TR mART core domain. NAD(+) is bound at residue Tyr99. Asn101 carries N-linked (GlcNAc...) asparagine glycosylation. NAD(+) is bound by residues Arg160 and Gln180. Arg160 is an active-site residue. The active site involves Ser183. Residue Asn196 is glycosylated (N-linked (GlcNAc...) asparagine). Ser214 serves as a coordination point for NAD(+). The active site involves Glu221. N-linked (GlcNAc...) asparagine glycosylation occurs at Asn250.

This sequence belongs to the Arg-specific ADP-ribosyltransferase family.

It is found in the secreted. The enzyme catalyses L-arginyl-[protein] + NAD(+) = N(omega)-(ADP-D-ribosyl)-L-arginyl-[protein] + nicotinamide + H(+). The chain is Ecto-ADP-ribosyltransferase 5 (ART5) from Homo sapiens (Human).